We begin with the raw amino-acid sequence, 141 residues long: Short-chain diamines transporter (141 aa).

4 consecutive transmembrane segments (helical) span residues 16–36, 39–59, 76–96, and 103–123; these read VILLVIIAIALSFIFDVPLEV, TLGIVMAVTSVFWNMIFNHFF, ILHAIGFEGGLMLVTIPMVAY, and WQAIVLDFGLTMCILVYTFIF.

It belongs to the proteobacterial antimicrobial compound efflux (PACE) (TC 2.A.117) family.

The protein localises to the cell inner membrane. Functionally, mediates the efflux of short-chain diamines when energized by an electrochemical gradient. Involved in resistance to the synthetic biocide chlorhexidine, a widely used antiseptic and disinfectant in both hospital and community settings. Interacts directly with chlorhexidine and mediates its efflux via an energy-dependent mechanism. The polypeptide is Short-chain diamines transporter (Acinetobacter baylyi (strain ATCC 33305 / BD413 / ADP1)).